An 809-amino-acid polypeptide reads, in one-letter code: Zinc finger CCCH domain-containing protein 24 (809 aa).

Position 1 is an N-acetylmethionine (Met-1). The interval 1–74 (METSSIEINE…NLESSDTKIT (74 aa)) is disordered. Over residues 30–46 (ETSSIDELPSSDSNATD) the composition is skewed to polar residues. A compositionally biased stretch (basic and acidic residues) spans 51-65 (VGEKRKRADEDEKTN). The C3H1-type zinc finger occupies 79-107 (WWKTSLCSYFRREASCSHGNECKYAHGEA). 2 residues coordinate S-adenosyl-L-methionine: Gln-536 and Glu-586. The tract at residues 652–693 (EEMTNSEHVADQNLPPSNTQVEELQDNEQKDSSSLEPEKTTK) is disordered. Positions 678–692 (NEQKDSSSLEPEKTT) are enriched in basic and acidic residues. Asp-704 contributes to the S-adenosyl-L-methionine binding site. The active-site Nucleophile is Cys-732.

Belongs to the class I-like SAM-binding methyltransferase superfamily. RNA M5U methyltransferase family.

In Arabidopsis thaliana (Mouse-ear cress), this protein is Zinc finger CCCH domain-containing protein 24.